The following is a 203-amino-acid chain: Cytochrome c oxidase assembly protein CtaG (203 aa).

Residues 1–16 (MADQQEKDQKLKKQQR) lie on the Cytoplasmic side of the membrane. A helical; Signal-anchor for type II membrane protein membrane pass occupies residues 17 to 39 (SNATIAFACLSFFVCMIGAAYAS). Topologically, residues 40–203 (VPLYRIFCQV…VKAETPTNGS (164 aa)) are periplasmic.

Belongs to the COX11/CtaG family.

The protein localises to the cell inner membrane. In terms of biological role, exerts its effect at some terminal stage of cytochrome c oxidase synthesis, probably by being involved in the insertion of the copper B into subunit I. The polypeptide is Cytochrome c oxidase assembly protein CtaG (Brucella anthropi (strain ATCC 49188 / DSM 6882 / CCUG 24695 / JCM 21032 / LMG 3331 / NBRC 15819 / NCTC 12168 / Alc 37) (Ochrobactrum anthropi)).